Here is a 278-residue protein sequence, read N- to C-terminus: Urease accessory protein UreD (278 aa).

The protein belongs to the UreD family. As to quaternary structure, ureD, UreF and UreG form a complex that acts as a GTP-hydrolysis-dependent molecular chaperone, activating the urease apoprotein by helping to assemble the nickel containing metallocenter of UreC. The UreE protein probably delivers the nickel.

It is found in the cytoplasm. Its function is as follows. Required for maturation of urease via the functional incorporation of the urease nickel metallocenter. This chain is Urease accessory protein UreD, found in Staphylococcus aureus (strain bovine RF122 / ET3-1).